Consider the following 26-residue polypeptide: Conotoxin Eb6.18 (26 aa).

Cystine bridges form between Cys7/Cys18 and Cys13/Cys25.

Belongs to the conotoxin O1 superfamily. As to expression, expressed by the venom duct.

It is found in the secreted. This chain is Conotoxin Eb6.18 (E1), found in Conus ebraeus (Hebrew cone).